Consider the following 267-residue polypeptide: Acyl-[acyl-carrier-protein]--UDP-N-acetylglucosamine O-acyltransferase (267 aa).

It belongs to the transferase hexapeptide repeat family. LpxA subfamily. Homotrimer.

The protein resides in the cytoplasm. The catalysed reaction is a (3R)-hydroxyacyl-[ACP] + UDP-N-acetyl-alpha-D-glucosamine = a UDP-3-O-[(3R)-3-hydroxyacyl]-N-acetyl-alpha-D-glucosamine + holo-[ACP]. Its pathway is glycolipid biosynthesis; lipid IV(A) biosynthesis; lipid IV(A) from (3R)-3-hydroxytetradecanoyl-[acyl-carrier-protein] and UDP-N-acetyl-alpha-D-glucosamine: step 1/6. In terms of biological role, involved in the biosynthesis of lipid A, a phosphorylated glycolipid that anchors the lipopolysaccharide to the outer membrane of the cell. This Proteus mirabilis (strain HI4320) protein is Acyl-[acyl-carrier-protein]--UDP-N-acetylglucosamine O-acyltransferase.